We begin with the raw amino-acid sequence, 3354 residues long: Cadherin-23 (3354 aa).

The N-terminal stretch at 1 to 23 is a signal peptide; sequence MGRHVATSCHVAWLLVLISGCWG. The Extracellular segment spans residues 24–3064; the sequence is QVNRLPFFTN…SVRLPDDMSA (3041 aa). Cadherin domains follow at residues 34–132, 133–236, 237–348, 349–460, 461–561, 562–671, 672–784, 779–890, 891–995, 996–1102, 1103–1208, 1210–1313, 1314–1418, 1420–1527, 1529–1634, 1635–1744, 1745–1851, 1852–1959, 1960–2069, 2070–2174, 2175–2293, 2297–2402, 2403–2509, 2510–2611, 2614–2722, 2729–2846, and 2847–2975; these read HFFD…APTF, HNQP…DPIF, INLP…APEF, NSSE…RPIF, SQPL…VPTF, QKDA…PPTF, SKPA…APYY, KDAP…DPTF, QNLP…TPTF, FPAV…RPIF, LQSS…APVF, QQQY…AVQF, SNAS…SPRF, FTSD…PPVI, SPFG…APMF, QQPH…VPTF, PRDY…DPVL, LNLP…HPLF, TKST…RPTF, SPAT…RPEF, LNPI…TPQF, GITY…NPIF, DQPS…RPQF, SKPQ…RPVF, PPNG…EPLF, SPQY…PPRF, and TKAE…EEEF. 2 N-linked (GlcNAc...) asparagine glycosylation sites follow: N155 and N206. N-linked (GlcNAc...) asparagine glycans are attached at residues N349, N393, N434, N466, N472, N652, N694, N765, N810, N827, N941, N1001, N1018, N1171, N1282, N1315, N1473, N1534, N1651, N1667, N1818, N1857, N1889, N1902, N2013, N2050, N2129, N2168, N2195, N2263, N2357, and N2369. 7 N-linked (GlcNAc...) asparagine glycosylation sites follow: N2616, N2749, N2808, N2877, N2896, N2941, and N2981. The chain crosses the membrane as a helical span at residues 3065 to 3085; that stretch reads LQMAIIVLAILLFLAAMLFVL. The Cytoplasmic segment spans residues 3086-3354; sequence MNWYYRTVHK…METPLEITEL (269 aa).

As to quaternary structure, antiparallel heterodimer with PCDH15. Interacts with USH1C and USH1G. In terms of tissue distribution, particularly strong expression in the retina. Found also in the cochlea.

The protein localises to the cell membrane. Its function is as follows. Cadherins are calcium-dependent cell adhesion proteins. They preferentially interact with themselves in a homophilic manner in connecting cells. CDH23 is required for establishing and/or maintaining the proper organization of the stereocilia bundle of hair cells in the cochlea and the vestibule during late embryonic/early postnatal development. It is part of the functional network formed by USH1C, USH1G, CDH23 and MYO7A that mediates mechanotransduction in cochlear hair cells. Required for normal hearing. This chain is Cadherin-23, found in Homo sapiens (Human).